We begin with the raw amino-acid sequence, 285 residues long: N-alpha-acetyltransferase 40 (285 aa).

An N-acetyltransferase domain is found at 88 to 274 (INYKLHKSRG…GGGRVVVPCD (187 aa)). Substrate is bound by residues Tyr116, 163–165 (TEE), and Tyr185. Acetyl-CoA is bound by residues 187 to 189 (VHV) and 195 to 200 (GHGIGR). Thr228 contributes to the substrate binding site. Asn233 is an acetyl-CoA binding site.

Belongs to the acetyltransferase family. NAA40 subfamily.

It is found in the nucleus. It localises to the cytoplasm. The enzyme catalyses N-terminal L-seryl-[histone H4] + acetyl-CoA = N-terminal N(alpha)-acetyl-L-seryl-[histone H4] + CoA + H(+). The catalysed reaction is N-terminal L-seryl-[histone H2A] + acetyl-CoA = N-terminal N(alpha)-acetyl-L-seryl-[histone H2A] + CoA + H(+). Functionally, N-alpha-acetyltransferase that specifically mediates the acetylation of the N-terminal residues of histones H4 and H2A. This is N-alpha-acetyltransferase 40 from Saccharomyces cerevisiae (strain ATCC 204508 / S288c) (Baker's yeast).